A 122-amino-acid chain; its full sequence is Putative ankyrin repeat protein L22 (122 aa).

ANK repeat units lie at residues 3–32, 33–62, 63–92, and 94–122; these read DNNY…DIKA, DDDY…DIRV, NNDY…NIRA, and DDYA…VLNQ.

In Acanthamoeba polyphaga (Amoeba), this protein is Putative ankyrin repeat protein L22.